A 168-amino-acid polypeptide reads, in one-letter code: G/U mismatch-specific DNA glycosylase (168 aa).

This sequence belongs to the uracil-DNA glycosylase (UDG) superfamily. TDG/mug family. Binds DNA as a monomer.

It is found in the cytoplasm. It carries out the reaction Specifically hydrolyzes mismatched double-stranded DNA and polynucleotides, releasing free uracil.. Excises ethenocytosine and uracil, which can arise by alkylation or deamination of cytosine, respectively, from the corresponding mispairs with guanine in ds-DNA. It is capable of hydrolyzing the carbon-nitrogen bond between the sugar-phosphate backbone of the DNA and the mispaired base. The complementary strand guanine functions in substrate recognition. Required for DNA damage lesion repair in stationary-phase cells. This chain is G/U mismatch-specific DNA glycosylase, found in Cronobacter sakazakii (strain ATCC BAA-894) (Enterobacter sakazakii).